Consider the following 334-residue polypeptide: MDDRARALLKALIERYIADGQPVGSRTLSKVFDLSPATIRNVMADLEELGLIHSPHTSAGRVPTPRGYRMFVDSLLAVRAYQFEPAHIGELLPVSEPSRAVNAAAALLSNLTQFAGVVLTPKRTQIFRQIEFIRLSDKRVLLIIVTPEGDVQNRILSAQRDYTEAELLEAGNFFNVHFSGKSFDAVRRTLSTELAQLRDDISRLMQAAVEAGAEAADDGEAVVISGERKLLDVTDIASDMDRLRKMFSLFEKKTDLLQLLDVSSRAQGVQIYIGGDSQLVPMEEVSVITAPYGVDGKVIGTLGVIGPTRMAYERVIPIVDITARLLSNALSHNQ.

Belongs to the HrcA family.

In terms of biological role, negative regulator of class I heat shock genes (grpE-dnaK-dnaJ and groELS operons). Prevents heat-shock induction of these operons. This is Heat-inducible transcription repressor HrcA from Bordetella bronchiseptica (strain ATCC BAA-588 / NCTC 13252 / RB50) (Alcaligenes bronchisepticus).